Consider the following 54-residue polypeptide: Large ribosomal subunit protein bL33 (54 aa).

This sequence belongs to the bacterial ribosomal protein bL33 family.

The polypeptide is Large ribosomal subunit protein bL33 (Elusimicrobium minutum (strain Pei191)).